A 545-amino-acid polypeptide reads, in one-letter code: Bifunctional purine biosynthesis protein PurH (545 aa).

The 150-residue stretch at 1–150 folds into the MGS-like domain; it reads MTNTNRPIRR…KNHATVAIVT (150 aa).

The protein belongs to the PurH family.

It carries out the reaction (6R)-10-formyltetrahydrofolate + 5-amino-1-(5-phospho-beta-D-ribosyl)imidazole-4-carboxamide = 5-formamido-1-(5-phospho-D-ribosyl)imidazole-4-carboxamide + (6S)-5,6,7,8-tetrahydrofolate. The enzyme catalyses IMP + H2O = 5-formamido-1-(5-phospho-D-ribosyl)imidazole-4-carboxamide. Its pathway is purine metabolism; IMP biosynthesis via de novo pathway; 5-formamido-1-(5-phospho-D-ribosyl)imidazole-4-carboxamide from 5-amino-1-(5-phospho-D-ribosyl)imidazole-4-carboxamide (10-formyl THF route): step 1/1. The protein operates within purine metabolism; IMP biosynthesis via de novo pathway; IMP from 5-formamido-1-(5-phospho-D-ribosyl)imidazole-4-carboxamide: step 1/1. In Bifidobacterium longum (strain NCC 2705), this protein is Bifunctional purine biosynthesis protein PurH.